A 155-amino-acid polypeptide reads, in one-letter code: NADPH-dependent 7-cyano-7-deazaguanine reductase (155 aa).

Cys-53 functions as the Thioimide intermediate in the catalytic mechanism. The active-site Proton donor is Asp-60. Substrate-binding positions include 75–77 (VES) and 94–95 (HE).

Belongs to the GTP cyclohydrolase I family. QueF type 1 subfamily.

It localises to the cytoplasm. The catalysed reaction is 7-aminomethyl-7-carbaguanine + 2 NADP(+) = 7-cyano-7-deazaguanine + 2 NADPH + 3 H(+). It functions in the pathway tRNA modification; tRNA-queuosine biosynthesis. In terms of biological role, catalyzes the NADPH-dependent reduction of 7-cyano-7-deazaguanine (preQ0) to 7-aminomethyl-7-deazaguanine (preQ1). This is NADPH-dependent 7-cyano-7-deazaguanine reductase from Brucella abortus (strain S19).